Here is a 1783-residue protein sequence, read N- to C-terminus: 6-methylsalicylic acid synthase (1783 aa).

The segment covering 1–31 (MITSTSSTEVLTPANGSDDSKGTTTPATSSG) has biased composition (polar residues). Positions 1–40 (MITSTSSTEVLTPANGSDDSKGTTTPATSSGDPEMHDDLL) are disordered. A Ketosynthase family 3 (KS3) domain is found at 45 to 474 (HDDVAIIGMA…GTVSHAIIEA (430 aa)). Catalysis depends on for beta-ketoacyl synthase activity residues Cys-217, His-352, and His-394. Residues 587–884 (WVFSGHGAQW…TPTMVRKQPA (298 aa)) are malonyl-CoA:ACP transacylase (MAT) domain. The active-site For acyl/malonyl transferase activity is the Ser-673. The tract at residues 942–1215 (THKPAANDLL…AFAGVEGESL (274 aa)) is product template (PT) domain. Residues 948 to 1064 (NDLLGTRTAL…ATVGADATPS (117 aa)) form an N-terminal hotdog fold region. The region spanning 948 to 1216 (NDLLGTRTAL…FAGVEGESLS (269 aa)) is the PKS/mFAS DH domain. The active-site Proton acceptor; for dehydratase activity is His-980. Positions 1078-1216 (PQKLSDSFSI…FAGVEGESLS (139 aa)) are C-terminal hotdog fold. Asp-1130 (proton donor; for dehydratase activity) is an active-site residue. Residues 1707–1781 (EYVLVVVKKC…HLVEYFCQVL (75 aa)) form the Carrier domain. Ser-1741 carries the O-(pantetheine 4'-phosphoryl)serine modification.

It carries out the reaction 3 malonyl-CoA + acetyl-CoA + NADPH + 3 H(+) = 6-methylsalicylate + 3 CO2 + NADP(+) + 4 CoA + H2O. The protein operates within secondary metabolite biosynthesis; terpenoid biosynthesis. Non-reducing polyketide synthase; part of the gene cluster that mediates the biosynthesis of macrophorins, isoprenoid epoxycyclohexenones containing cyclized drimane moieties. The first step of the pathway is the synthesis of 6-methylsalicylic acid (6-MSA) by the polyketide synthase macA. 6-MSA is then converted to m-cresol by the decarboxylase macB. The cytochrome P450 monooxygenase macC then catalyzes the oxidation of m-cresol to toluquinol. Epoxidation of toluquinol is then performed by the short chain dehydrogenase macD, with the help of macE, and a further prenylation by macG leads to 7-deacetoxyyanuthone A. The next step is the hydroxylation of C-22 of 7-deacetoxyyanuthone A by the cytochrome P450 monooxygenase macH to yield 22-deacetylyanuthone A. O-Mevalon transferase macI then attaches mevalon to the hydroxyl group of 22-deacetylyanuthone A to produce yanuthone E. The terpene cyclase macJ catalyzes the cyclization of 22-deacetylyanuthone A to macrophorin A. MacJ is also able to catalyze cyclization of yanuthone E and 7-deacetoxyyanuthone A to their corresponding macrophorins. The macJ products can be further modified by macH and macJ, as well as by the FAD-dependent monooxygenase macF, to produce additional macrophorins, including 4'-oxomacrophorin A, 4'-oxomacrophorin D and 4'-oxomacrophorin E. This Penicillium terrestre protein is 6-methylsalicylic acid synthase.